We begin with the raw amino-acid sequence, 57 residues long: Lantibiotic nukacin (57 aa).

Residues 1-30 (MENSKVMKDIEVANLLEEVQEDELNEVLGA) constitute a propeptide that is removed on maturation. Residues 39–44 (TVSHDC) constitute a cross-link (beta-methyllanthionine (Thr-Cys)). 2 consecutive cross-links (lanthionine (Ser-Cys)) follow at residues 41-55 (SHDCHMNSFQFVFTC) and 48-56 (SFQFVFTCC). Threonine 54 bears the 2,3-didehydrobutyrine mark.

Maturation of lantibiotics involves the enzymatic conversion of Thr, and Ser into dehydrated AA and the formation of thioether bonds with cysteine. This is followed by membrane translocation and cleavage of the modified precursor.

The protein resides in the secreted. Lanthionine-containing peptide antibiotic (lantibiotic) active on Gram-positive bacteria. The bactericidal activity of lantibiotics is based on depolarization of energized bacterial cytoplasmic membranes, initiated by the formation of aqueous transmembrane pores. The chain is Lantibiotic nukacin from Staphylococcus simulans.